We begin with the raw amino-acid sequence, 336 residues long: SCP domain-containing protein 1 (336 aa).

A signal peptide spans 1–18; sequence MEFKLLLVLCFNIGLICS. N47 is a glycosylation site (N-linked (GlcNAc...) asparagine). A compositionally biased stretch (polar residues) spans 73-85; the sequence is QGGNTAPSSSLPG. Residues 73–94 are disordered; that stretch reads QGGNTAPSSSLPGVSSMPMPSA. The 118-residue stretch at 175–292 folds into the SCP domain; sequence LEEHNKFRSD…YCGDMSFIAC (118 aa). N213 and N257 each carry an N-linked (GlcNAc...) asparagine glycan.

Component of the acid-insoluble and acid-soluble organic matrix of calcified layers of the shell (at protein level).

It localises to the secreted. The chain is SCP domain-containing protein 1 from Lottia gigantea (Giant owl limpet).